We begin with the raw amino-acid sequence, 322 residues long: Lipoyl synthase (322 aa).

Residues Met-1 to Gln-24 form a disordered region. Over residues Arg-14–Gln-24 the composition is skewed to basic and acidic residues. [4Fe-4S] cluster-binding residues include Cys-59, Cys-64, Cys-70, Cys-85, Cys-89, Cys-92, and Ser-298. Positions Trp-71–Leu-287 constitute a Radical SAM core domain.

Belongs to the radical SAM superfamily. Lipoyl synthase family. It depends on [4Fe-4S] cluster as a cofactor.

The protein resides in the cytoplasm. The catalysed reaction is [[Fe-S] cluster scaffold protein carrying a second [4Fe-4S](2+) cluster] + N(6)-octanoyl-L-lysyl-[protein] + 2 oxidized [2Fe-2S]-[ferredoxin] + 2 S-adenosyl-L-methionine + 4 H(+) = [[Fe-S] cluster scaffold protein] + N(6)-[(R)-dihydrolipoyl]-L-lysyl-[protein] + 4 Fe(3+) + 2 hydrogen sulfide + 2 5'-deoxyadenosine + 2 L-methionine + 2 reduced [2Fe-2S]-[ferredoxin]. It functions in the pathway protein modification; protein lipoylation via endogenous pathway; protein N(6)-(lipoyl)lysine from octanoyl-[acyl-carrier-protein]: step 2/2. Its function is as follows. Catalyzes the radical-mediated insertion of two sulfur atoms into the C-6 and C-8 positions of the octanoyl moiety bound to the lipoyl domains of lipoate-dependent enzymes, thereby converting the octanoylated domains into lipoylated derivatives. The sequence is that of Lipoyl synthase from Chelativorans sp. (strain BNC1).